Consider the following 339-residue polypeptide: MamK-like protein (339 aa).

ATP-binding positions include 18–19 (YS), D74, 162–164 (AWT), and 216–220 (KEQFA).

It belongs to the FtsA/MreB family. MamK subfamily. As to quaternary structure, forms cytoplasmic filament polymers. Forms filaments with MamK.

The protein resides in the cytoplasm. It localises to the cytoskeleton. It carries out the reaction ATP + H2O = ADP + phosphate + H(+). Functionally, protein with ATPase activity which forms pole-to-pole filaments in vivo, probably with MamK. Efficient filament formation requires MamK. Probably promotes turnover of MamK filaments, by providing a monomer pool. In vivo, in the absence of its paralog MamK, forms thin filaments from pole to pole. In vitro forms straight filaments and bundles in the absence of ATP. Filament formation is triggered by KCl and MgCl(2); polymerizes more slowly and makes thinner filaments than MamK. Expression in E.coli yields a filament in the cell's longitudinal axis; the protein nucleates at one pole or the cell septum. This Paramagnetospirillum magneticum (strain ATCC 700264 / AMB-1) (Magnetospirillum magneticum) protein is MamK-like protein.